We begin with the raw amino-acid sequence, 244 residues long: Phosphoadenosine 5'-phosphosulfate reductase (244 aa).

The active-site Nucleophile; cysteine thiosulfonate intermediate is Cys239.

Belongs to the PAPS reductase family. CysH subfamily.

It is found in the cytoplasm. It carries out the reaction [thioredoxin]-disulfide + sulfite + adenosine 3',5'-bisphosphate + 2 H(+) = [thioredoxin]-dithiol + 3'-phosphoadenylyl sulfate. It functions in the pathway sulfur metabolism; hydrogen sulfide biosynthesis; sulfite from sulfate: step 3/3. Its function is as follows. Catalyzes the formation of sulfite from phosphoadenosine 5'-phosphosulfate (PAPS) using thioredoxin as an electron donor. This is Phosphoadenosine 5'-phosphosulfate reductase from Yersinia pseudotuberculosis serotype O:1b (strain IP 31758).